Here is a 354-residue protein sequence, read N- to C-terminus: UPF0324 membrane protein BL1094 (354 aa).

Transmembrane regions (helical) follow at residues 12–33 (IATV…FASW), 43–65 (FGAL…SAYV), 86–108 (LLRL…TQGI), 112–129 (PIAA…YAIA), 138–160 (LAIL…LAGS), 175–197 (VTMA…IALG), 239–256 (LSRV…AIWW), 271–293 (VAFP…VPFV), 300–321 (LVDF…NVNF), and 331–353 (PMLA…AMLF).

The protein belongs to the UPF0324 family.

The protein localises to the cell membrane. This Bifidobacterium longum (strain NCC 2705) protein is UPF0324 membrane protein BL1094.